Reading from the N-terminus, the 108-residue chain is ATP-dependent Clp protease adapter protein ClpS (108 aa).

The span at methionine 1–glutamate 10 shows a compositional bias: basic and acidic residues. A disordered region spans residues methionine 1 to lysine 21.

This sequence belongs to the ClpS family. In terms of assembly, binds to the N-terminal domain of the chaperone ClpA.

In terms of biological role, involved in the modulation of the specificity of the ClpAP-mediated ATP-dependent protein degradation. The polypeptide is ATP-dependent Clp protease adapter protein ClpS (Rhodospirillum centenum (strain ATCC 51521 / SW)).